A 338-amino-acid chain; its full sequence is Fructose-1,6-bisphosphatase class 1 1 (338 aa).

Glu-88, Asp-107, Leu-109, and Asp-110 together coordinate Mg(2+). Residues 110 to 113 and Asn-196 contribute to the substrate site; that span reads DGSS. Position 268 (Glu-268) interacts with Mg(2+).

This sequence belongs to the FBPase class 1 family. In terms of assembly, homotetramer. Mg(2+) is required as a cofactor.

The protein resides in the cytoplasm. It carries out the reaction beta-D-fructose 1,6-bisphosphate + H2O = beta-D-fructose 6-phosphate + phosphate. Its pathway is carbohydrate biosynthesis; Calvin cycle. The chain is Fructose-1,6-bisphosphatase class 1 1 from Bradyrhizobium sp. (strain BTAi1 / ATCC BAA-1182).